The primary structure comprises 488 residues: Probable metabolite transport protein YBR241C (488 aa).

Topologically, residues 1-18 are cytoplasmic; sequence MAETERLMPNGGSRETKP. The chain crosses the membrane as a helical span at residues 19–39; the sequence is LITGHLILGTIVACLGSIQYG. Residues 40–87 lie on the Vacuolar side of the membrane; the sequence is YHIAELNAPQEFLSCSRFEAPDENISYDDTWVGQHGLKQCIALTDSQY. Residue N63 is glycosylated (N-linked (GlcNAc...) asparagine). A helical membrane pass occupies residues 88 to 108; sequence GAITSIFSIGGLFGSYYAGNW. The Cytoplasmic segment spans residues 109 to 121; it reads ANRYGRKYVSMGA. A helical membrane pass occupies residues 122-142; the sequence is SAMCMVSSLLLFFSNSYLQLL. Residues 143–146 are Vacuolar-facing; the sequence is FGRF. Residues 147–167 form a helical membrane-spanning segment; it reads LVGMSCGTAIVITPLFINEIA. Topologically, residues 168-178 are cytoplasmic; sequence PVEWRGAMGSM. Residues 179–198 traverse the membrane as a helical segment; that stretch reads NQVSINLGILLTQTLALKYA. The Vacuolar segment spans residues 199-204; sequence DSYNWR. A helical transmembrane segment spans residues 205–225; that stretch reads WLLFSGSVIAVANILAWLKVD. Residues 226–299 lie on the Cytoplasmic side of the membrane; that stretch reads ESPRWLVSHG…DPSYKKPRTV (74 aa). The segment covering 258-279 has biased composition (basic and acidic residues); it reads EIQDWQRSHGHNRDPESSEETH. Residues 258–281 form a disordered region; it reads EIQDWQRSHGHNRDPESSEETHSG. Residues 300 to 320 form a helical membrane-spanning segment; that stretch reads ILAILSCQQFCGINSIIFYGV. The Vacuolar segment spans residues 321-322; the sequence is KV. Residues 323–337 traverse the membrane as a helical segment; the sequence is IGKILPDYSIQVNFA. Residues 338-344 lie on the Cytoplasmic side of the membrane; it reads ISILNVV. A helical membrane pass occupies residues 345–364; that stretch reads VTLAASAIIDHVGRRPLLLA. Topologically, residues 365–390 are vacuolar; sequence STTVMTAMSLLISVGLTLSVSFLLVT. Residues 391 to 411 traverse the membrane as a helical segment; that stretch reads ATFVYIAAFAIGLGPIPFLII. At 412-419 the chain is on the cytoplasmic side; it reads GELSYPQD. Residues 420 to 442 traverse the membrane as a helical segment; that stretch reads AATAQSFGTVCNWLATFIVGYLF. Residues 443–446 are Vacuolar-facing; it reads PIGH. The chain crosses the membrane as a helical span at residues 447 to 463; it reads GLMGGYVFAIFAAIAAM. Topologically, residues 464–488 are cytoplasmic; the sequence is FATYVYKRVPETKGKTTYSEVWAGY.

It belongs to the major facilitator superfamily. Sugar transporter (TC 2.A.1.1) family.

It is found in the vacuole membrane. This chain is Probable metabolite transport protein YBR241C, found in Saccharomyces cerevisiae (strain ATCC 204508 / S288c) (Baker's yeast).